The sequence spans 503 residues: Cytochrome P450 714C1 (503 aa).

Residues 1 to 6 (MEKLLA) are Lumenal-facing. The chain crosses the membrane as a helical; Signal-anchor for type III membrane protein span at residues 7–27 (LIVVLVILLSLALFYLCNILW). Residues 28-503 (LRAVKIRKKL…GLPLMVTKLP (476 aa)) lie on the Cytoplasmic side of the membrane. A heme-binding site is contributed by cysteine 450.

This sequence belongs to the cytochrome P450 family. Heme is required as a cofactor.

The protein resides in the membrane. Functionally, probably not involved in gibberellin metabolism since over-expression of CYP714C1 in a heterologous system does not induce semi-dwarfism. The protein is Cytochrome P450 714C1 (CYP714C1) of Oryza sativa subsp. japonica (Rice).